Here is a 130-residue protein sequence, read N- to C-terminus: MSGRGKQGGKARAKAKSRSSRAGLQFPVGRVHRLLRKGNYAERVGAGAPVYMAAVLEYLTAEILELAGNAARDNKKTRIIPRHLQLAIRNDEELNKLLGKVTIAQGGVLPNIQAVLLPKKTESHHKAKGK.

Residues 1–22 (MSGRGKQGGKARAKAKSRSSRA) form a disordered region. Serine 2 is modified (N-acetylserine). Serine 2 bears the Phosphoserine; by RPS6KA5 mark. Arginine 4 carries the citrulline; alternate modification. Symmetric dimethylarginine; by PRMT5; alternate is present on arginine 4. Residues lysine 6 and lysine 10 each carry the N6-(2-hydroxyisobutyryl)lysine; alternate modification. Lysine 6 carries the post-translational modification N6-(beta-hydroxybutyryl)lysine; alternate. Lysine 6 carries the N6-acetyllysine; alternate modification. A compositionally biased stretch (basic residues) spans 7–19 (QGGKARAKAKSRS). Lysine 10 bears the N6-lactoyllysine; alternate mark. N6-succinyllysine; alternate is present on lysine 10. Residues lysine 14 and lysine 16 each participate in a glycyl lysine isopeptide (Lys-Gly) (interchain with G-Cter in ubiquitin) cross-link. At lysine 37 the chain carries N6-(2-hydroxyisobutyryl)lysine; alternate. Lysine 37 bears the N6-(beta-hydroxybutyryl)lysine; alternate mark. Lysine 37 carries the N6-crotonyllysine; alternate modification. Residues lysine 75 and lysine 76 each carry the N6-(2-hydroxyisobutyryl)lysine modification. The residue at position 96 (lysine 96) is an N6-(2-hydroxyisobutyryl)lysine; alternate. At lysine 96 the chain carries N6-succinyllysine; alternate. An N6-glutaryllysine; alternate modification is found at lysine 96. Lysine 100 carries the post-translational modification N6-glutaryllysine. At glutamine 105 the chain carries N5-methylglutamine. The residue at position 119 (lysine 119) is an N6-(2-hydroxyisobutyryl)lysine; alternate. N6-crotonyllysine; alternate is present on residues lysine 119 and lysine 120. 2 positions are modified to N6-glutaryllysine; alternate: lysine 119 and lysine 120. Residue lysine 120 is modified to N6-(beta-hydroxybutyryl)lysine; alternate. A Glycyl lysine isopeptide (Lys-Gly) (interchain with G-Cter in ubiquitin); alternate cross-link involves residue lysine 120. The residue at position 121 (threonine 121) is a Phosphothreonine; by DCAF1. At lysine 126 the chain carries N6-(beta-hydroxybutyryl)lysine; alternate. Position 126 is an N6-crotonyllysine; alternate (lysine 126). Residue lysine 126 is modified to N6-glutaryllysine; alternate.

It belongs to the histone H2A family. In terms of assembly, the nucleosome is a histone octamer containing two molecules each of H2A, H2B, H3 and H4 assembled in one H3-H4 heterotetramer and two H2A-H2B heterodimers. The octamer wraps approximately 147 bp of DNA. Post-translationally, deiminated on Arg-4 in granulocytes upon calcium entry. Monoubiquitination of Lys-120 (H2AK119Ub) by RING1, TRIM37 and RNF2/RING2 complex gives a specific tag for epigenetic transcriptional repression and participates in X chromosome inactivation of female mammals. It is involved in the initiation of both imprinted and random X inactivation. Ubiquitinated H2A is enriched in inactive X chromosome chromatin. Ubiquitination of H2A functions downstream of methylation of 'Lys-27' of histone H3 (H3K27me). H2AK119Ub by RNF2/RING2 can also be induced by ultraviolet and may be involved in DNA repair. Following DNA double-strand breaks (DSBs), it is ubiquitinated through 'Lys-63' linkage of ubiquitin moieties by the E2 ligase UBE2N and the E3 ligases RNF8 and RNF168, leading to the recruitment of repair proteins to sites of DNA damage. Ubiquitination at Lys-14 and Lys-16 (H2AK13Ub and H2AK15Ub, respectively) in response to DNA damage is initiated by RNF168 that mediates monoubiquitination at these 2 sites, and 'Lys-63'-linked ubiquitin are then conjugated to monoubiquitin; RNF8 is able to extend 'Lys-63'-linked ubiquitin chains in vitro. H2AK119Ub and ionizing radiation-induced 'Lys-63'-linked ubiquitination (H2AK13Ub and H2AK15Ub) are distinct events. In terms of processing, phosphorylation on Ser-2 (H2AS1ph) is enhanced during mitosis. Phosphorylation on Ser-2 by RPS6KA5/MSK1 directly represses transcription. Acetylation of H3 inhibits Ser-2 phosphorylation by RPS6KA5/MSK1. Phosphorylation at Thr-121 (H2AT120ph) by DCAF1 is present in the regulatory region of many tumor suppresor genes and down-regulates their transcription. Post-translationally, symmetric dimethylation on Arg-4 by the PRDM1/PRMT5 complex may play a crucial role in the germ-cell lineage. Glutamine methylation at Gln-105 (H2AQ104me) by FBL is specifically dedicated to polymerase I. It is present at 35S ribosomal DNA locus and impairs binding of the FACT complex. In terms of processing, crotonylation (Kcr) is specifically present in male germ cells and marks testis-specific genes in post-meiotic cells, including X-linked genes that escape sex chromosome inactivation in haploid cells. Crotonylation marks active promoters and enhancers and confers resistance to transcriptional repressors. It is also associated with post-meiotically activated genes on autosomes. Post-translationally, hydroxybutyrylation of histones is induced by starvation. Lactylated in macrophages by EP300/P300 by using lactoyl-CoA directly derived from endogenous or exogenous lactate, leading to stimulates gene transcription.

The protein localises to the nucleus. Its subcellular location is the chromosome. Its function is as follows. Core component of nucleosome. Nucleosomes wrap and compact DNA into chromatin, limiting DNA accessibility to the cellular machineries which require DNA as a template. Histones thereby play a central role in transcription regulation, DNA repair, DNA replication and chromosomal stability. DNA accessibility is regulated via a complex set of post-translational modifications of histones, also called histone code, and nucleosome remodeling. The protein is Histone H2A type 2-A (Hist2h2aa1) of Mus musculus (Mouse).